Consider the following 187-residue polypeptide: MNMSATLILAFAMSMDAFAASIGKGAVLHNPRFRDAIRTGLIFGVIEAITPLIGWALGFFASQYILEWDHWVAFTLLLILGGRMVVEGFKDSPDCRCEKVKNHSLALLVCTAIATSLDAMAIGVGLAFLQVNIFHTAMVIGCATMIMVTLGMMIGRYIGPILGKKAEIIGGLVLIGIGCNILYEHLG.

A run of 6 helical transmembrane segments spans residues 3–23 (MSATLILAFAMSMDAFAASIG), 41–61 (LIFGVIEAITPLIGWALGFFA), 62–82 (SQYILEWDHWVAFTLLLILGG), 107–129 (LLVCTAIATSLDAMAIGVGLAFL), 143–163 (ATMIMVTLGMMIGRYIGPILG), and 166–186 (AEIIGGLVLIGIGCNILYEHL).

Belongs to the MntP (TC 9.B.29) family.

The protein localises to the cell inner membrane. Probably functions as a manganese efflux pump. This chain is Putative manganese efflux pump MntP, found in Pectobacterium atrosepticum (strain SCRI 1043 / ATCC BAA-672) (Erwinia carotovora subsp. atroseptica).